A 391-amino-acid chain; its full sequence is 8-amino-7-oxononanoate synthase (391 aa).

Arg-19 contributes to the substrate binding site. Residue 106-107 (GY) participates in pyridoxal 5'-phosphate binding. His-131 is a substrate binding site. Pyridoxal 5'-phosphate-binding residues include Ser-178, His-206, and Thr-234. An N6-(pyridoxal phosphate)lysine modification is found at Lys-237. Substrate is bound at residue Thr-353.

It belongs to the class-II pyridoxal-phosphate-dependent aminotransferase family. BioF subfamily. As to quaternary structure, homodimer. It depends on pyridoxal 5'-phosphate as a cofactor.

The enzyme catalyses 6-carboxyhexanoyl-[ACP] + L-alanine + H(+) = (8S)-8-amino-7-oxononanoate + holo-[ACP] + CO2. It functions in the pathway cofactor biosynthesis; biotin biosynthesis. Functionally, catalyzes the decarboxylative condensation of pimeloyl-[acyl-carrier protein] and L-alanine to produce 8-amino-7-oxononanoate (AON), [acyl-carrier protein], and carbon dioxide. The protein is 8-amino-7-oxononanoate synthase of Geobacter metallireducens (strain ATCC 53774 / DSM 7210 / GS-15).